Reading from the N-terminus, the 438-residue chain is DEAD-box ATP-dependent RNA helicase CshB (438 aa).

Positions 4–32 (TKFELYELKPFIIDAVHRLGFYEPTDIQK) match the Q motif motif. The region spanning 35-208 (IPAVLKKESV…KKYMENPKYA (174 aa)) is the Helicase ATP-binding domain. Position 48-55 (48-55 (SQTGTGKT)) interacts with ATP. A DEAD box motif is present at residues 156–159 (DEAD). A Helicase C-terminal domain is found at 235–385 (LLFDIMSHLN…EWKKGDDRQR (151 aa)). Positions 380-438 (GDDRQRRKKRKKTPNEADEIAHRLVKKPKKVKPGYKKKMSYEMEKIKKKQRRNQSKKRK) are disordered. A compositionally biased stretch (basic and acidic residues) spans 392–401 (TPNEADEIAH). Composition is skewed to basic residues over residues 402–417 (RLVK…YKKK) and 425–438 (IKKK…KKRK).

The protein belongs to the DEAD box helicase family. As to quaternary structure, interacts with CspB when cells are transcriptionally active. May interact with RNA helicases CshA and DbpA (DeaD), may be a component of a possible RNA degradosome complex composed of rny, rnja, rnjb, pnp, pfkA and eno (although rnjA and rnjB's presence is unclear). Specifically interacts with pnp and rny.

The protein localises to the cytoplasm. The protein resides in the nucleoid. The catalysed reaction is ATP + H2O = ADP + phosphate + H(+). Functionally, DEAD-box RNA helicase that plays a role in 70S ribosome assembly. May work in conjunction with the cold shock proteins to ensure proper initiation of transcription at low and optimal temperatures. This chain is DEAD-box ATP-dependent RNA helicase CshB, found in Bacillus subtilis (strain 168).